The sequence spans 274 residues: Penicillin-insensitive murein endopeptidase (274 aa).

An N-terminal signal peptide occupies residues 1–19; the sequence is MKKTAIALLAWFVSSASLA. Intrachain disulfides connect Cys44/Cys265, Cys187/Cys235, and Cys216/Cys223. Zn(2+)-binding residues include His110, His113, Asp120, Asp147, His150, and His211. The disordered stretch occupies residues 225 to 274; it reads DQPLPPPGDGCGAELQSWFEPPKPGTTKPEKKTPPPLPPSCQALLDEHVL.

Belongs to the peptidase M74 family. In terms of assembly, dimer. Zn(2+) is required as a cofactor.

It localises to the periplasm. In terms of biological role, murein endopeptidase that cleaves the D-alanyl-meso-2,6-diamino-pimelyl amide bond that connects peptidoglycan strands. Likely plays a role in the removal of murein from the sacculus. This Salmonella choleraesuis (strain SC-B67) protein is Penicillin-insensitive murein endopeptidase.